A 256-amino-acid chain; its full sequence is Imidazole glycerol phosphate synthase subunit HisF (256 aa).

Residues aspartate 11 and aspartate 130 contribute to the active site.

Belongs to the HisA/HisF family. In terms of assembly, heterodimer of HisH and HisF.

Its subcellular location is the cytoplasm. The enzyme catalyses 5-[(5-phospho-1-deoxy-D-ribulos-1-ylimino)methylamino]-1-(5-phospho-beta-D-ribosyl)imidazole-4-carboxamide + L-glutamine = D-erythro-1-(imidazol-4-yl)glycerol 3-phosphate + 5-amino-1-(5-phospho-beta-D-ribosyl)imidazole-4-carboxamide + L-glutamate + H(+). It functions in the pathway amino-acid biosynthesis; L-histidine biosynthesis; L-histidine from 5-phospho-alpha-D-ribose 1-diphosphate: step 5/9. In terms of biological role, IGPS catalyzes the conversion of PRFAR and glutamine to IGP, AICAR and glutamate. The HisF subunit catalyzes the cyclization activity that produces IGP and AICAR from PRFAR using the ammonia provided by the HisH subunit. The polypeptide is Imidazole glycerol phosphate synthase subunit HisF (Prochlorococcus marinus (strain NATL1A)).